The sequence spans 376 residues: Crh-like protein 4 (376 aa).

The first 21 residues, 1 to 21, serve as a signal peptide directing secretion; it reads MFPKIFLTAATALLSAKSTFA. The GH16 domain maps to 22-229; sequence QTYSSCNPLF…WARGPTDYSN (208 aa). A disulfide bridge connects residues Cys27 and Cys35. The Nucleophile role is filled by Glu119. The active-site Proton donor is Glu123. Chitin-binding residues include Glu123, Lys202, Trp206, and Thr217. Residue Ser346 is the site of GPI-anchor amidated serine attachment. Residues 347 to 376 constitute a propeptide, removed in mature form; sequence ASPINISRINPLLLCGPFTFFFFAAIRRWP. N-linked (GlcNAc...) asparagine glycosylation is present at Asn351.

It belongs to the glycosyl hydrolase 16 family. CRH1 subfamily.

It is found in the cell membrane. The catalysed reaction is Random endo-hydrolysis of N-acetyl-beta-D-glucosaminide (1-&gt;4)-beta-linkages in chitin and chitodextrins.. Its function is as follows. Dual chitinase/transglycosylase that plays a role in cell wall architecture. Chitinase and transglycosylase activities are coupled. Required for the polysaccharide cross-linking at the septa and the cell wall. More specifically, transfers chitin to 1,6-beta-glucan in the cell wall. This is Crh-like protein 4 from Botryotinia fuckeliana (strain B05.10) (Noble rot fungus).